Reading from the N-terminus, the 35-residue chain is MSDIN-like toxin proprotein 1 (35 aa).

Positions 1–10 are excised as a propeptide; the sequence is MSDINATRLP. Positions 11–20 form a cross-link, cyclopeptide (Ile-Pro); the sequence is IIIVLGLIIP. The propeptide occupies 21–35; the sequence is LCVSDIEMILTRGER.

Belongs to the MSDIN fungal toxin family. In terms of processing, processed by the macrocyclase-peptidase enzyme POPB to yield a toxic cyclic decapeptide. POPB first removes 10 residues from the N-terminus. Conformational trapping of the remaining peptide forces the enzyme to release this intermediate rather than proceed to macrocyclization. The enzyme rebinds the remaining peptide in a different conformation and catalyzes macrocyclization of the N-terminal 10 residues.

Its function is as follows. Probable toxin that belongs to the MSDIN-like toxin family responsible for a large number of food poisoning cases and deaths. The polypeptide is MSDIN-like toxin proprotein 1 (Amanita rimosa).